The primary structure comprises 258 residues: Alpha-hydroxynitrile lyase (258 aa).

Residues S81 and H236 each act as proton donor/acceptor in the active site.

It belongs to the AB hydrolase superfamily. Hydroxynitrile lyase family. Homodimer.

The catalysed reaction is (R)-mandelonitrile = benzaldehyde + hydrogen cyanide. In terms of biological role, involved in cyanogenesis, the release of HCN from injured tissues. Displays R-selective hydroxynitrile lyase activity. Also accepts nitromethane (MeNO2) as a donor in a reaction with aromatic aldehydes to yield (R)-beta-nitro alcohols. This is Alpha-hydroxynitrile lyase from Arabidopsis thaliana (Mouse-ear cress).